Here is a 149-residue protein sequence, read N- to C-terminus: MATRFRQTRRRRGHVSMGYGRIGKHRKQRGGRGNAGGQHHRKTWFTTFHPDYFGKHGMRVFHLKANKYYCPSINVDSLWSLVGKDVQEQYKNAKTGEEVPVIDCVKHGYFKVLGKGFLPKQPVIVRARYFSEKAQQKIKAVGGACELTA.

The tract at residues 21–40 (RIGKHRKQRGGRGNAGGQHH) is disordered.

It belongs to the universal ribosomal protein uL15 family. As to quaternary structure, component of the large ribosomal subunit.

It localises to the cytoplasm. Its subcellular location is the cytosol. The protein resides in the endoplasmic reticulum. Functionally, component of the large ribosomal subunit. The ribosome is a large ribonucleoprotein complex responsible for the synthesis of proteins in the cell. In Entamoeba histolytica (strain ATCC 30459 / HM-1:IMSS / ABRM), this protein is Large ribosomal subunit protein uL15C (rpl27a-3).